A 180-amino-acid polypeptide reads, in one-letter code: MGDPRKSRRKWEGPGMPWLSQALKSEQKIMGDYGLRNKKEIWLARTIVTGYRHMARSLLALPPAERAVREKQLLGKLYKLGLLKSEQSTIDDILGLEEESLLERRLQTIVHRKGLARTIYQARQLIVHGHIAVGGRKITSPGYIVKRDEEDSIDFYPTSPFKNNPPTAGQGEVNVEQKGN.

The region spanning 104-166 (RRLQTIVHRK…PTSPFKNNPP (63 aa)) is the S4 RNA-binding domain. The disordered stretch occupies residues 155–180 (FYPTSPFKNNPPTAGQGEVNVEQKGN).

This sequence belongs to the universal ribosomal protein uS4 family. Part of the 30S ribosomal subunit. Contacts protein S5. The interaction surface between S4 and S5 is involved in control of translational fidelity.

Functionally, one of the primary rRNA binding proteins, it binds directly to 16S rRNA where it nucleates assembly of the body of the 30S subunit. In terms of biological role, with S5 and S12 plays an important role in translational accuracy. The polypeptide is Small ribosomal subunit protein uS4 (Metallosphaera sedula (strain ATCC 51363 / DSM 5348 / JCM 9185 / NBRC 15509 / TH2)).